A 296-amino-acid chain; its full sequence is uncharacterized protein (296 aa).

A helical membrane pass occupies residues 1 to 21 (MIFAVVDILEISIQLLCILLF).

The protein resides in the membrane. This is an uncharacterized protein from Caenorhabditis elegans.